A 289-amino-acid chain; its full sequence is Energy-coupling factor transporter ATP-binding protein EcfA2 (289 aa).

The ABC transporter domain maps to 3–245 (IEFKNVDYVY…QEWVKKHYLD (243 aa)). 40–47 (GHTGSGKS) lines the ATP pocket.

It belongs to the ABC transporter superfamily. Energy-coupling factor EcfA family. In terms of assembly, forms a stable energy-coupling factor (ECF) transporter complex composed of 2 membrane-embedded substrate-binding proteins (S component), 2 ATP-binding proteins (A component) and 2 transmembrane proteins (T component).

The protein resides in the cell membrane. Functionally, ATP-binding (A) component of a common energy-coupling factor (ECF) ABC-transporter complex. Unlike classic ABC transporters this ECF transporter provides the energy necessary to transport a number of different substrates. The polypeptide is Energy-coupling factor transporter ATP-binding protein EcfA2 (Lactobacillus johnsonii (strain CNCM I-12250 / La1 / NCC 533)).